A 182-amino-acid polypeptide reads, in one-letter code: Ribosome maturation factor RimM (182 aa).

In terms of domain architecture, PRC barrel spans 102–182 (EEGDYYWKDL…TIEVDWDPGF (81 aa)).

Belongs to the RimM family. In terms of assembly, binds ribosomal protein uS19.

It is found in the cytoplasm. An accessory protein needed during the final step in the assembly of 30S ribosomal subunit, possibly for assembly of the head region. Essential for efficient processing of 16S rRNA. May be needed both before and after RbfA during the maturation of 16S rRNA. It has affinity for free ribosomal 30S subunits but not for 70S ribosomes. This chain is Ribosome maturation factor RimM, found in Salmonella gallinarum (strain 287/91 / NCTC 13346).